A 1028-amino-acid chain; its full sequence is SWI/SNF-related matrix-associated actin-dependent regulator of chromatin subfamily A containing DEAD/H box 1 (1028 aa).

Position 1 is an N-acetylmethionine (Met-1). Residues 13-81 (KRNKIEEAPE…PENDRKASIS (69 aa)) form a disordered region. Thr-54 carries the post-translational modification Phosphothreonine. Phosphoserine is present on Ser-57. At Thr-71 the chain carries Phosphothreonine. Lys-77 participates in a covalent cross-link: Glycyl lysine isopeptide (Lys-Gly) (interchain with G-Cter in SUMO2). Ser-79 carries the post-translational modification Phosphoserine. Lys-84 is covalently cross-linked (Glycyl lysine isopeptide (Lys-Gly) (interchain with G-Cter in SUMO2)). Residues Ser-124, Ser-127, Ser-132, and Ser-153 each carry the phosphoserine modification. In terms of domain architecture, CUE 1 spans 158 to 200 (YSDNLSTVRQTRYSENLSSDLLKLIDSTSTMDGAIAAALLMFG). 2 disordered regions span residues 204 to 253 (GGGP…NWEK) and 303 to 348 (ASPS…KRKK). Residues Ser-213, Ser-216, Ser-241, and Ser-244 each carry the phosphoserine modification. In terms of domain architecture, CUE 2 spans 253-296 (KQESIVLKLQKEFPNFDKEELREVLKEHEWMYTEALESLKVFAE). Ser-304 carries the phosphoserine modification. Glycyl lysine isopeptide (Lys-Gly) (interchain with G-Cter in SUMO2) cross-links involve residues Lys-337 and Lys-473. The 169-residue stretch at 511-679 (ALVHKHGLNG…MSLLNFVMPH (169 aa)) folds into the Helicase ATP-binding domain. 523-531 (ADEMGLGKT) is an ATP binding site. The DEGH box signature appears at 630–633 (DEGH). Positions 723 to 740 (RRVKEEVLKQLPPKKDRI) match the Nuclear localization signal motif. Lys-726 is covalently cross-linked (Glycyl lysine isopeptide (Lys-Gly) (interchain with G-Cter in SUMO2)). The Helicase C-terminal domain occupies 860–1012 (VLGCILSELK…MTTVDEGDEG (153 aa)). 899–906 (YLRLDGKT) provides a ligand contact to ATP. Lys-998 participates in a covalent cross-link: Glycyl lysine isopeptide (Lys-Gly) (interchain with G-Cter in SUMO2). Residues 1007–1010 (DEGD) carry the DEAD box motif.

Belongs to the SNF2/RAD54 helicase family. In terms of assembly, binds to DNA preferentially in the vicinity of transcriptional start sites. Interacts with MSH2 and TRIM28. Part of a complex composed of TRIM28, HDAC1, HDAC2 and EHMT2. Interacts with PCNA.

Its subcellular location is the nucleus. The protein resides in the chromosome. It catalyses the reaction ATP + H2O = ADP + phosphate + H(+). Its function is as follows. DNA helicase that possesses intrinsic ATP-dependent nucleosome-remodeling activity and is both required for DNA repair and heterochromatin organization. Promotes DNA end resection of double-strand breaks (DSBs) following DNA damage: probably acts by weakening histone DNA interactions in nucleosomes flanking DSBs. Required for the restoration of heterochromatin organization after replication. Acts at replication sites to facilitate the maintenance of heterochromatin by directing H3 and H4 histones deacetylation, H3 'Lys-9' trimethylation (H3K9me3) and restoration of silencing. In Bos taurus (Bovine), this protein is SWI/SNF-related matrix-associated actin-dependent regulator of chromatin subfamily A containing DEAD/H box 1 (SMARCAD1).